The chain runs to 116 residues: Large ribosomal subunit protein uL24 (116 aa).

The protein belongs to the universal ribosomal protein uL24 family. In terms of assembly, part of the 50S ribosomal subunit.

One of two assembly initiator proteins, it binds directly to the 5'-end of the 23S rRNA, where it nucleates assembly of the 50S subunit. Functionally, one of the proteins that surrounds the polypeptide exit tunnel on the outside of the subunit. The sequence is that of Large ribosomal subunit protein uL24 from Protochlamydia amoebophila (strain UWE25).